A 145-amino-acid chain; its full sequence is Small ribosomal subunit protein uS12 (145 aa).

The protein belongs to the universal ribosomal protein uS12 family. As to quaternary structure, component of the small ribosomal subunit. Mature ribosomes consist of a small (40S) and a large (60S) subunit. The 40S subunit contains about 32 different proteins and 1 molecule of RNA (18S). The 60S subunit contains 45 different proteins and 3 molecules of RNA (25S, 5.8S and 5S).

It is found in the cytoplasm. Functionally, component of the ribosome, a large ribonucleoprotein complex responsible for the synthesis of proteins in the cell. The small ribosomal subunit (SSU) binds messenger RNAs (mRNAs) and translates the encoded message by selecting cognate aminoacyl-transfer RNA (tRNA) molecules. The large subunit (LSU) contains the ribosomal catalytic site termed the peptidyl transferase center (PTC), which catalyzes the formation of peptide bonds, thereby polymerizing the amino acids delivered by tRNAs into a polypeptide chain. The nascent polypeptides leave the ribosome through a tunnel in the LSU and interact with protein factors that function in enzymatic processing, targeting, and the membrane insertion of nascent chains at the exit of the ribosomal tunnel. The sequence is that of Small ribosomal subunit protein uS12 (RPS23A) from Candida albicans (strain SC5314 / ATCC MYA-2876) (Yeast).